The sequence spans 128 residues: 14.7 kDa protein (128 aa).

The C4-type zinc-finger motif lies at 65-94 (CFDCGAYLYDDHVCKRFTSRSNSDCLSVIH).

Functionally, may act as a regulatory factor during viral transcription. The polypeptide is 14.7 kDa protein (Shallot virus X (ShVX)).